The chain runs to 636 residues: Bifunctional phosphonoacetaldehyde hydrolase/aminoethylphosphonate transaminase (636 aa).

Residues 1 to 276 (MKKIYGEKIK…IKSDFVPEND (276 aa)) are phosphonoacetaldehyde hydrolase. Catalysis depends on Asp-15, which acts as the Nucleophile. 2 residues coordinate Mg(2+): Asp-15 and Ala-17. Catalysis depends on Lys-56, which acts as the Schiff-base intermediate with substrate. Mg(2+) is bound at residue Asp-189. The 2-aminoethylphosphonate--pyruvate transaminase stretch occupies residues 277–636 (YILLTPGPLS…ADVIEKFINR (360 aa)). An N6-(pyridoxal phosphate)lysine modification is found at Lys-465.

The protein in the N-terminal section; belongs to the HAD-like hydrolase superfamily. PhnX family. It in the C-terminal section; belongs to the class-V pyridoxal-phosphate-dependent aminotransferase family. PhnW subfamily. In terms of assembly, homodimer. It depends on Mg(2+) as a cofactor. Requires pyridoxal 5'-phosphate as cofactor.

It carries out the reaction (2-aminoethyl)phosphonate + pyruvate = phosphonoacetaldehyde + L-alanine. It catalyses the reaction phosphonoacetaldehyde + H2O = acetaldehyde + phosphate + H(+). In terms of biological role, involved in phosphonate degradation. The chain is Bifunctional phosphonoacetaldehyde hydrolase/aminoethylphosphonate transaminase (phnXW) from Clostridioides difficile (strain 630) (Peptoclostridium difficile).